The sequence spans 419 residues: Dynein regulatory complex protein 9 (419 aa).

Disordered regions lie at residues 25-45 and 394-419; these read TGEP…EETS and NFKM…RRKK. The segment covering 30–45 has biased composition (acidic residues); the sequence is EAAEEDLDYEEEEETS. Residues 372 to 401 enclose the IQ domain; the sequence is ELRSIVKLQAWWRGSVVRKEIGNFKMPKKD. Basic and acidic residues predominate over residues 394–413; sequence NFKMPKKDKDDSKDSKGKEK.

This sequence belongs to the DRC9 family. As to quaternary structure, component of the nexin-dynein regulatory complex (N-DRC). Interacts (via IQ domain) with CALM when calcium levels are low. Does not interact with CALM in the presence of Ca(2+). Interacts with the HSP70 proteins HSPA1L and HSPA8. May form a complex with CAMK4 and HSP70. In terms of tissue distribution, expressed in the testes (at protein level). Also detected in oviduct (at protein level). Also detected in the trachea.

Its subcellular location is the cytoplasm. It is found in the cell projection. The protein localises to the cilium. The protein resides in the flagellum. It localises to the cytoskeleton. Its subcellular location is the flagellum axoneme. Its function is as follows. Component of the nexin-dynein regulatory complex (N-DRC), a key regulator of ciliary/flagellar motility which maintains the alignment and integrity of the distal axoneme and regulates microtubule sliding in motile axonemes. Binds calmodulin when cellular Ca(2+) levels are low and thereby contributes to the regulation of calcium and calmodulin-dependent protein kinase IV (CAMK4) activity; contributes to the regulation of CAMK4 signaling cascades. Required for normal axoneme assembly in sperm flagella, normal sperm tail formation and for male fertility. This chain is Dynein regulatory complex protein 9 (Iqcg), found in Mus musculus (Mouse).